A 252-amino-acid chain; its full sequence is Thiamine thiazole synthase (252 aa).

NAD(+) contacts are provided by residues serine 35, 54 to 55, glycine 62, valine 126, and 152 to 154; these read EK and HVD. Fe cation contacts are provided by aspartate 154 and histidine 169. Methionine 217 contacts NAD(+). Residue arginine 227 coordinates glycine.

This sequence belongs to the THI4 family. As to quaternary structure, homooctamer; tetramer of dimers. Fe(2+) is required as a cofactor.

It carries out the reaction hydrogen sulfide + glycine + NAD(+) = ADP-5-ethyl-4-methylthiazole-2-carboxylate + nicotinamide + 3 H2O + H(+). It functions in the pathway cofactor biosynthesis; thiamine diphosphate biosynthesis. Its function is as follows. Involved in the biosynthesis of the thiazole moiety of thiamine. Catalyzes the conversion of NAD and glycine to adenosine diphosphate 5-(2-hydroxyethyl)-4-methylthiazole-2-carboxylate (ADT), an adenylated thiazole intermediate, using free sulfide as a source of sulfur. The sequence is that of Thiamine thiazole synthase from Pyrococcus horikoshii (strain ATCC 700860 / DSM 12428 / JCM 9974 / NBRC 100139 / OT-3).